A 517-amino-acid polypeptide reads, in one-letter code: Nicotine N-demethylase CYP82E4 (517 aa).

The helical transmembrane segment at 2–22 (VFPIEAIVGLVTFTFLFFFLW) threads the bilayer. Lys-254 is covalently cross-linked (Glycyl lysine isopeptide (Lys-Gly) (interchain with G-Cter in ubiquitin)). Cys-457 serves as a coordination point for heme.

The protein belongs to the cytochrome P450 family. CYP82E2 subfamily. It depends on heme as a cofactor. As to expression, expressed at low levels in green leaves.

The protein resides in the membrane. The catalysed reaction is (S)-nicotine + reduced [NADPH--hemoprotein reductase] + O2 = (S)-nornicotine + formaldehyde + oxidized [NADPH--hemoprotein reductase] + H2O + H(+). It participates in alkaloid biosynthesis; nicotine biosynthesis. Functionally, involved in the biosynthesis of pyridine alkaloid natural products, leading mainly to the production of anabasine, anatabine, nicotine and nornicotine, effective deterrents against herbivores with antiparasitic and pesticide properties (neurotoxins); nornicotine serves as the precursor in the synthesis of the carcinogen compound N'-nitrosonornicotine (NNN). Catalyzes the demethylation of nicotine to form nornicotine. This Nicotiana tabacum (Common tobacco) protein is Nicotine N-demethylase CYP82E4.